The sequence spans 190 residues: Ribosome maturation factor RimP (190 aa).

Positions E159–K190 are disordered. Acidic residues predominate over residues D177 to K190.

This sequence belongs to the RimP family.

The protein resides in the cytoplasm. Its function is as follows. Required for maturation of 30S ribosomal subunits. This Rhodococcus opacus (strain B4) protein is Ribosome maturation factor RimP.